The chain runs to 539 residues: Glutamyl-tRNA(Gln) amidotransferase subunit B, mitochondrial (539 aa).

Belongs to the GatB/GatE family. GatB subfamily. As to quaternary structure, subunit of the heterotrimeric GatFAB amidotransferase (AdT) complex, composed of A, B and F subunits.

Its subcellular location is the mitochondrion. The enzyme catalyses L-glutamyl-tRNA(Gln) + L-glutamine + ATP + H2O = L-glutaminyl-tRNA(Gln) + L-glutamate + ADP + phosphate + H(+). Allows the formation of correctly charged Gln-tRNA(Gln) through the transamidation of misacylated Glu-tRNA(Gln) in the mitochondria. The reaction takes place in the presence of glutamine and ATP through an activated gamma-phospho-Glu-tRNA(Gln). This is Glutamyl-tRNA(Gln) amidotransferase subunit B, mitochondrial from Kluyveromyces lactis (strain ATCC 8585 / CBS 2359 / DSM 70799 / NBRC 1267 / NRRL Y-1140 / WM37) (Yeast).